A 316-amino-acid chain; its full sequence is Protein U25 (316 aa).

Belongs to the herpesviridae US22 family.

In Human herpesvirus 6B (HHV-6 variant B), this protein is Protein U25 (U25).